A 263-amino-acid chain; its full sequence is HTH-type transcriptional repressor NanR (263 aa).

The interval 1 to 21 (MGLMNAFDSQTEDSSPVIGRN) is disordered. An HTH gntR-type domain is found at 30 to 98 (KKLSEMVEEE…NGERARVSRP (69 aa)). The segment at residues 58 to 77 (ERELMAFFNVGRPSVREALA) is a DNA-binding region (H-T-H motif).

This sequence belongs to the NanR family.

Its function is as follows. Transcriptional repressor that controls expression of the genes required for the catabolism of sialic acids. The polypeptide is HTH-type transcriptional repressor NanR (Escherichia coli O7:K1 (strain IAI39 / ExPEC)).